The chain runs to 380 residues: Lipid-A-disaccharide synthase (380 aa).

The protein belongs to the LpxB family.

It carries out the reaction a lipid X + a UDP-2-N,3-O-bis[(3R)-3-hydroxyacyl]-alpha-D-glucosamine = a lipid A disaccharide + UDP + H(+). The protein operates within bacterial outer membrane biogenesis; LPS lipid A biosynthesis. Its function is as follows. Condensation of UDP-2,3-diacylglucosamine and 2,3-diacylglucosamine-1-phosphate to form lipid A disaccharide, a precursor of lipid A, a phosphorylated glycolipid that anchors the lipopolysaccharide to the outer membrane of the cell. This Photobacterium profundum (strain SS9) protein is Lipid-A-disaccharide synthase.